The following is a 745-amino-acid chain: 5-methyltetrahydropteroyltriglutamate--homocysteine methyltransferase (745 aa).

Residues 19 to 22 and K119 contribute to the 5-methyltetrahydropteroyltri-L-glutamate site; that span reads RELK. L-homocysteine is bound by residues 418–420 and E471; that span reads IGS. L-methionine contacts are provided by residues 418–420 and E471; that span reads IGS. 5-methyltetrahydropteroyltri-L-glutamate is bound by residues 502 to 503 and W548; that span reads RC. Residue D586 participates in L-homocysteine binding. L-methionine is bound at residue D586. Residue E592 participates in 5-methyltetrahydropteroyltri-L-glutamate binding. The Zn(2+) site is built by H628, C630, and E652. The active-site Proton donor is H681. C713 lines the Zn(2+) pocket.

The protein belongs to the vitamin-B12 independent methionine synthase family. Requires Zn(2+) as cofactor.

The catalysed reaction is 5-methyltetrahydropteroyltri-L-glutamate + L-homocysteine = tetrahydropteroyltri-L-glutamate + L-methionine. It functions in the pathway amino-acid biosynthesis; L-methionine biosynthesis via de novo pathway; L-methionine from L-homocysteine (MetE route): step 1/1. Functionally, catalyzes the transfer of a methyl group from 5-methyltetrahydrofolate to homocysteine resulting in methionine formation. The sequence is that of 5-methyltetrahydropteroyltriglutamate--homocysteine methyltransferase from Corynebacterium glutamicum (strain ATCC 13032 / DSM 20300 / JCM 1318 / BCRC 11384 / CCUG 27702 / LMG 3730 / NBRC 12168 / NCIMB 10025 / NRRL B-2784 / 534).